Reading from the N-terminus, the 181-residue chain is Oligoribonuclease (181 aa).

The Exonuclease domain maps to 8–171 (LIWVDLEMTG…DDIHDSIAEL (164 aa)). Residue Tyr129 is part of the active site.

The protein belongs to the oligoribonuclease family.

The protein resides in the cytoplasm. Functionally, 3'-to-5' exoribonuclease specific for small oligoribonucleotides. The polypeptide is Oligoribonuclease (Photobacterium profundum (strain SS9)).